We begin with the raw amino-acid sequence, 705 residues long: Translation initiation factor IF-2 (705 aa).

Residues 40-124 (DDQIKALDKK…QPAAPKEIPS (85 aa)) form a disordered region. Basic and acidic residues predominate over residues 41 to 58 (DQIKALDKKFKKEQKNDN). The span at 59–77 (KQSTQNNHQKSNNQNQNKG) shows a compositional bias: low complexity. A compositionally biased stretch (basic residues) spans 94-108 (KGNKKNNRNNKKNNK). One can recognise a tr-type G domain in the interval 207–376 (ERPAVVTIMG…GLVAEVQELK (170 aa)). The segment at 216–223 (GHVDHGKT) is G1. 216–223 (GHVDHGKT) contributes to the GTP binding site. Positions 241–245 (GITQH) are G2. Residues 262 to 265 (DTPG) are G3. Residues 262–266 (DTPGH) and 316–319 (NKID) each bind GTP. Residues 316–319 (NKID) form a G4 region. Positions 352–354 (SAL) are G5.

This sequence belongs to the TRAFAC class translation factor GTPase superfamily. Classic translation factor GTPase family. IF-2 subfamily.

It is found in the cytoplasm. Its function is as follows. One of the essential components for the initiation of protein synthesis. Protects formylmethionyl-tRNA from spontaneous hydrolysis and promotes its binding to the 30S ribosomal subunits. Also involved in the hydrolysis of GTP during the formation of the 70S ribosomal complex. The sequence is that of Translation initiation factor IF-2 from Staphylococcus aureus (strain MRSA252).